An 818-amino-acid chain; its full sequence is Auxin response factor 12 (818 aa).

Residues 1-10 (MSSSSAASIG) show a composition bias toward low complexity. Residues 1 to 24 (MSSSSAASIGPPQPPPPPAPPEEE) form a disordered region. Positions 11–20 (PPQPPPPPAP) are enriched in pro residues. A DNA-binding region (TF-B3) is located at residues 135-237 (FCKTLTASDT…QLLLGIRRAS (103 aa)). 2 disordered regions span residues 526–565 (NDQKQKIQPDQSYQVPTSAVLPSPTSLPSHLREKFGFSDP) and 629–648 (GSVLHNSPTSKDGSVENKIG). The segment covering 629-640 (GSVLHNSPTSKD) has biased composition (polar residues). Residues 719-803 (RTFVKVYKSG…WYIKILSPED (85 aa)) enclose the PB1 domain.

This sequence belongs to the ARF family. Homodimers and heterodimers. In terms of tissue distribution, expressed in roots, culms, leaves and young panicles.

It localises to the nucleus. Its function is as follows. Auxin response factors (ARFs) are transcriptional factors that bind specifically to the DNA sequence 5'-TGTCTC-3' found in the auxin-responsive promoter elements (AuxREs). This chain is Auxin response factor 12 (ARF12), found in Oryza sativa subsp. japonica (Rice).